The primary structure comprises 131 residues: Global transcriptional regulator Spx (131 aa).

A disulfide bridge links Cys-10 with Cys-13.

Belongs to the ArsC family. Spx subfamily. Interacts with the C-terminal domain of the alpha subunit of the RNAP.

The protein localises to the cytoplasm. Its function is as follows. Global transcriptional regulator that plays a key role in stress response and exerts either positive or negative regulation of genes. Acts by interacting with the C-terminal domain of the alpha subunit of the RNA polymerase (RNAP). This interaction can enhance binding of RNAP to the promoter region of target genes and stimulate their transcription, or block interaction of RNAP with activator. This chain is Global transcriptional regulator Spx, found in Staphylococcus saprophyticus subsp. saprophyticus (strain ATCC 15305 / DSM 20229 / NCIMB 8711 / NCTC 7292 / S-41).